The sequence spans 146 residues: VHWSAEEKQLITGLWGKVNVADCGAEALARLLIVYPWTERFFSSFGNLSSPTAIIGNPMVRAHGKKVLTSFGEAVKNLDNIKNTFAQLSELHCDKLHVDPENFRLLGDILIIVLAAHFSKDFTPDCQAAWQKLVRVVAHALARKYH.

Residues 2 to 146 (HWSAEEKQLI…VAHALARKYH (145 aa)) enclose the Globin domain. Positions 63 and 92 each coordinate heme b.

This sequence belongs to the globin family. As to quaternary structure, heterotetramer of two alpha chains and two beta chains. Red blood cells.

Its function is as follows. Involved in oxygen transport from the lung to the various peripheral tissues. In Anseranas semipalmata (Magpie goose), this protein is Hemoglobin subunit beta (HBB).